A 249-amino-acid chain; its full sequence is Probable septum site-determining protein MinC (249 aa).

The tract at residues alanine 116–alanine 149 is disordered. Positions serine 119–arginine 130 are enriched in pro residues. The span at alanine 131 to proline 142 shows a compositional bias: low complexity.

Belongs to the MinC family. In terms of assembly, interacts with MinD and FtsZ.

Cell division inhibitor that blocks the formation of polar Z ring septums. Rapidly oscillates between the poles of the cell to destabilize FtsZ filaments that have formed before they mature into polar Z rings. Prevents FtsZ polymerization. The sequence is that of Probable septum site-determining protein MinC from Xanthomonas campestris pv. campestris (strain ATCC 33913 / DSM 3586 / NCPPB 528 / LMG 568 / P 25).